The primary structure comprises 548 residues: Lipase 2 (548 aa).

The N-terminal stretch at 1 to 14 (MKLCLLALGAAVAA) is a signal peptide. Cysteines 74 and 111 form a disulfide. S223 functions as the Acyl-ester intermediate in the catalytic mechanism. A disulfide bond links C282 and C291. Residue E355 is the Charge relay system of the active site. N365 is a glycosylation site (N-linked (GlcNAc...) asparagine). The Charge relay system role is filled by H463.

The protein belongs to the type-B carboxylesterase/lipase family.

It catalyses the reaction a triacylglycerol + H2O = a diacylglycerol + a fatty acid + H(+). The chain is Lipase 2 (LIP2) from Diutina rugosa (Yeast).